Reading from the N-terminus, the 551-residue chain is Solute carrier family 22 member 6 (551 aa).

Over 1–9 (MAFNDLLKQ) the chain is Cytoplasmic. A helical transmembrane segment spans residues 10-30 (VGGVGRFQLIQVTMVVAPLLL). The Extracellular segment spans residues 31-135 (MASHNTLQNF…LVCSHRAFRQ (105 aa)). 4 N-linked (GlcNAc...) asparagine glycosylation sites follow: Asn39, Asn56, Asn92, and Asn113. A helical membrane pass occupies residues 136–156 (LAQSLYMVGVLLGAMVFGYLA). Residues 157 to 164 (DRLGRRKV) are Cytoplasmic-facing. The helical transmembrane segment at 165–187 (LILNYLQTAVSGTCAAYAPNYTV) threads the bilayer. Residues 188-195 (YCVFRLLS) lie on the Extracellular side of the membrane. The helical transmembrane segment at 196-216 (GMSLASIAINCMTLNVEWMPI) threads the bilayer. Over 217-224 (HTRAYVGT) the chain is Cytoplasmic. The helical transmembrane segment at 225–245 (LIGYVYSLGQFLLAGIAYAVP) threads the bilayer. At 246-248 (HWR) the chain is on the extracellular side. The chain crosses the membrane as a helical span at residues 249–269 (HLQLVVSVPFFIAFIYSWFFI). The Cytoplasmic portion of the chain corresponds to 270–337 (ESARWYSSSG…ELLRCPTLRH (68 aa)). Residues 338 to 358 (LFLCLSMLWFATSFAYYGLVM) traverse the membrane as a helical segment. At 359 to 368 (DLQGFGVSMY) the chain is on the extracellular side. Residues 369 to 389 (LIQVIFGAVDLPAKFVCFLVI) traverse the membrane as a helical segment. Topologically, residues 390 to 395 (NSMGRR) are cytoplasmic. The chain crosses the membrane as a helical span at residues 396 to 416 (PAQMASLLLAGICILVNGIIP). Residues 417–425 (KSHTIIRTS) lie on the Extracellular side of the membrane. The chain crosses the membrane as a helical span at residues 426–446 (LAVLGKGCLASSFNCIFLYTG). The Cytoplasmic segment spans residues 447-484 (ELYPTVIRQTGLGMGSTMARVGSIVSPLVSMTAEFYPS). Residues 485–505 (MPLFIFGAVPVVASAVTALLP) form a helical membrane-spanning segment. The Extracellular portion of the chain corresponds to 506-551 (ETLGQPLPDTVQDLKSRSRGKQNQQQQEQQKQMMPLQASTQEKNGL). Positions 514–551 (DTVQDLKSRSRGKQNQQQQEQQKQMMPLQASTQEKNGL) are disordered. Residues 526 to 537 (KQNQQQQEQQKQ) show a composition bias toward low complexity. Polar residues predominate over residues 542–551 (QASTQEKNGL).

It belongs to the major facilitator (TC 2.A.1) superfamily. Organic cation transporter (TC 2.A.1.19) family. Post-translationally, glycosylated. Glycosylation is necessary for proper targeting of the transporter to the plasma membrane. In terms of tissue distribution, highly expressed in kidney; in the particular segment of the proximal tubule. In kidney, found preferentially in the cortex and outer medulla and weakly in the inner medulla. Expressed to a lower extent in brain.

Its subcellular location is the cell membrane. The protein localises to the basolateral cell membrane. It localises to the basal cell membrane. It carries out the reaction (6R)-L-erythro-5,6,7,8-tetrahydrobiopterin(out) + a dicarboxylate(in) = (6R)-L-erythro-5,6,7,8-tetrahydrobiopterin(in) + a dicarboxylate(out). It catalyses the reaction L-erythro-7,8-dihydrobiopterin(out) + a dicarboxylate(in) = L-erythro-7,8-dihydrobiopterin(in) + a dicarboxylate(out). The enzyme catalyses L-sepiapterin(out) + a dicarboxylate(in) = L-sepiapterin(in) + a dicarboxylate(out). The catalysed reaction is prostaglandin F2alpha(out) + a dicarboxylate(in) = prostaglandin F2alpha(in) + a dicarboxylate(out). It carries out the reaction prostaglandin E2(out) + a dicarboxylate(in) = prostaglandin E2(in) + a dicarboxylate(out). It catalyses the reaction 3',5'-cyclic AMP(out) + a dicarboxylate(in) = 3',5'-cyclic AMP(in) + a dicarboxylate(out). The enzyme catalyses 3',5'-cyclic GMP(out) + a dicarboxylate(in) = 3',5'-cyclic GMP(in) + a dicarboxylate(out). The catalysed reaction is urate(out) + a dicarboxylate(in) = urate(in) + a dicarboxylate(out). It carries out the reaction kynurenate(out) + glutarate(in) = kynurenate(in) + glutarate(out). It catalyses the reaction (indol-3-yl)acetate(out) + a dicarboxylate(in) = (indol-3-yl)acetate(in) + a dicarboxylate(out). The enzyme catalyses indoxyl sulfate(out) + a dicarboxylate(in) = indoxyl sulfate(in) + a dicarboxylate(out). The catalysed reaction is N-benzoylglycine(out) + a dicarboxylate(in) = N-benzoylglycine(in) + a dicarboxylate(out). It carries out the reaction 3-carboxy-4-methyl-5-propyl-2-furanpropanoate(out) + a dicarboxylate(in) = 3-carboxy-4-methyl-5-propyl-2-furanpropanoate(in) + a dicarboxylate(out). In terms of biological role, secondary active transporter that functions as a Na(+)-independent organic anion (OA)/dicarboxylate antiporter where the uptake of one molecule of OA into the cell is coupled with an efflux of one molecule of intracellular dicarboxylate such as alpha-ketoglutarate or glutarate. Mediates the uptake of OA across the basolateral side of proximal tubule epithelial cells, thereby contributing to the renal elimination of endogenous OA from the systemic circulation into the urine. Function as a biopterin transporters involved in the uptake and the secretion of coenzymes tetrahydrobiopterin (BH4) dihydrobiopterin (BH2) and sepiapterin to urine, thereby determining baseline levels of blood biopterins. Transports prostaglandin E2 (PGE2) and prostaglandin F2-alpha (PGF2-alpha) and may contribute to their renal excretion. Also mediates the uptake of cyclic nucleotides such as cAMP and cGMP. Involved in the transport of neuroactive tryptophan metabolites kynurenate (KYNA) and xanthurenate (XA) and may contribute to their secretion from the brain. May transport glutamate. Also involved in the disposition of uremic toxins and potentially toxic xenobiotics by the renal organic anion secretory pathway, helping reduce their undesired toxicological effects on the body. Uremic toxins include the indoxyl sulfate (IS), hippurate, indole acetate (IA), 3-carboxy-4- methyl-5-propyl-2-furanpropionate(CMPF) and urate. Xenobiotics include the mycotoxin ochratoxin (OTA). May also contribute to the transport of organic compounds in testes across the blood-testis-barrier. May also work as a bidirectional OA/dicarboxylate exchanger. This is Solute carrier family 22 member 6 from Rattus norvegicus (Rat).